Reading from the N-terminus, the 93-residue chain is Late embryogenesis abundant protein B19.1A (93 aa).

The interval 1–93 (MASGQQERSQ…IDESKFKTKS (93 aa)) is disordered. Composition is skewed to basic and acidic residues over residues 9-19 (SQLDRKAREGE) and 73-93 (GGER…KTKS).

Belongs to the small hydrophilic plant seed protein family. Embryos and young seedlings.

In terms of biological role, lea proteins are late embryonic proteins abundant in higher plant seed embryos. It may have a role in desiccation tolerance by acting as an osmoprotective protein or as a desiccation-damage repair protein. In Hordeum vulgare (Barley), this protein is Late embryogenesis abundant protein B19.1A (B19.1A).